A 166-amino-acid polypeptide reads, in one-letter code: PTS system glucose-specific EIIA component (166 aa).

The region spanning 36-140 (DVVFSEKIVG…SVLTPIVISN (105 aa)) is the PTS EIIA type-1 domain. Zn(2+) is bound by residues H73 and H88. Residue H88 is the Tele-phosphohistidine intermediate; for EIIA activity of the active site. H88 is modified (phosphohistidine; by HPr).

In terms of assembly, heterodimer with glycerol kinase (glpk). Zn(2+) is required as a cofactor.

The protein localises to the cytoplasm. Functionally, the phosphoenolpyruvate-dependent sugar phosphotransferase system (sugar PTS), a major carbohydrate active transport system, catalyzes the phosphorylation of incoming sugar substrates concomitantly with their translocation across the cell membrane. The enzyme II complex composed of PtsG and Crr is involved in glucose transport. The polypeptide is PTS system glucose-specific EIIA component (crr) (Haemophilus influenzae (strain ATCC 51907 / DSM 11121 / KW20 / Rd)).